Reading from the N-terminus, the 147-residue chain is Large ribosomal subunit protein uL15 (147 aa).

Over residues 1–14 (MKLHELRPAEGAVR) the composition is skewed to basic and acidic residues. Residues 1–54 (MKLHELRPAEGAVRDRKRKGRGTASGLGKTAGRGSNGQKARSGGGVRPGFEGGQ) form a disordered region. Gly residues-rich tracts occupy residues 23–35 (TASG…GRGS) and 42–52 (SGGGVRPGFEG).

The protein belongs to the universal ribosomal protein uL15 family. Part of the 50S ribosomal subunit.

In terms of biological role, binds to the 23S rRNA. The sequence is that of Large ribosomal subunit protein uL15 from Alkaliphilus oremlandii (strain OhILAs) (Clostridium oremlandii (strain OhILAs)).